The primary structure comprises 334 residues: MKKNQFLKESDITAESVFFMKRRQVLKALGISAAALSLPHAAHADLLSWFKGNDRPPAPAGKPLEFSKPAAWQNNLPLTPADKVSGYNNFYEFGLDKADPAANAGSLKTDTWTLKISGEVAKPLTLDHDDLTRRFPLEERIYRMRCVEAWSMVVPWIGFPLHKLLALAEPTSNAKYVAFETIYAPEQMPGLQDRFIGGGLKYPYVEGLRLDEAMHPLTLMTVGVYGKALPPQNGAPVRLIVPWKYGFKGIKSIVSIKLTREHPPTTWNLAAPDEYGFYANVNPHVDHPRWSQATERFIGSGGILDVQRQPTLLFNGYADQVASLYRGLDLRENF.

The tat-type signal signal peptide spans 1-44; it reads MKKNQFLKESDITAESVFFMKRRQVLKALGISAAALSLPHAAHA. Residues asparagine 88, 91 to 92, cysteine 146, threonine 181, asparagine 233, arginine 238, and 249 to 251 contribute to the Mo-molybdopterin site; these read YE and GIK.

This sequence belongs to the MsrP family. In terms of assembly, heterodimer of a catalytic subunit (MsrP) and a heme-binding subunit (MsrQ). Mo-molybdopterin serves as cofactor. Predicted to be exported by the Tat system. The position of the signal peptide cleavage has not been experimentally proven.

The protein localises to the periplasm. The enzyme catalyses L-methionyl-[protein] + a quinone + H2O = L-methionyl-(S)-S-oxide-[protein] + a quinol. It carries out the reaction L-methionyl-[protein] + a quinone + H2O = L-methionyl-(R)-S-oxide-[protein] + a quinol. Its function is as follows. Part of the MsrPQ system that repairs oxidized periplasmic proteins containing methionine sulfoxide residues (Met-O), using respiratory chain electrons. Thus protects these proteins from oxidative-stress damage caused by reactive species of oxygen and chlorine generated by the host defense mechanisms. MsrPQ is essential for the maintenance of envelope integrity under bleach stress, rescuing a wide series of structurally unrelated periplasmic proteins from methionine oxidation, including the primary periplasmic chaperone SurA and the lipoprotein Pal. The catalytic subunit MsrP is non-stereospecific, being able to reduce both (R-) and (S-) diastereoisomers of methionine sulfoxide. This Shigella dysenteriae serotype 1 (strain Sd197) protein is Protein-methionine-sulfoxide reductase catalytic subunit MsrP.